An 808-amino-acid polypeptide reads, in one-letter code: Probable inorganic carbon transporter subunit DabA (808 aa).

Cysteine 334, aspartate 336, histidine 494, and cysteine 509 together coordinate Zn(2+).

Belongs to the inorganic carbon transporter (TC 9.A.2) DabA family. In terms of assembly, forms a complex with DabB. It depends on Zn(2+) as a cofactor.

The protein resides in the cell inner membrane. Functionally, part of an energy-coupled inorganic carbon pump. The sequence is that of Probable inorganic carbon transporter subunit DabA from Allorhizobium ampelinum (strain ATCC BAA-846 / DSM 112012 / S4) (Agrobacterium vitis (strain S4)).